A 64-amino-acid polypeptide reads, in one-letter code: MPKMKSHRGASKRFKRTASGKLKRGRAYTSHLFGNKSTKAKRKLRKASMVSSGDFKRIRHMIAK.

The segment covering 1 to 26 has biased composition (basic residues); it reads MPKMKSHRGASKRFKRTASGKLKRGR. 2 disordered regions span residues 1 to 28 and 33 to 52; these read MPKM…GRAY and FGNK…MVSS.

It belongs to the bacterial ribosomal protein bL35 family.

This Exiguobacterium sibiricum (strain DSM 17290 / CCUG 55495 / CIP 109462 / JCM 13490 / 255-15) protein is Large ribosomal subunit protein bL35.